The chain runs to 156 residues: Ribosomal RNA large subunit methyltransferase H (156 aa).

Residues leucine 73, glycine 104, and 123 to 128 (LSALTL) contribute to the S-adenosyl-L-methionine site.

This sequence belongs to the RNA methyltransferase RlmH family. As to quaternary structure, homodimer.

It localises to the cytoplasm. It carries out the reaction pseudouridine(1915) in 23S rRNA + S-adenosyl-L-methionine = N(3)-methylpseudouridine(1915) in 23S rRNA + S-adenosyl-L-homocysteine + H(+). Its function is as follows. Specifically methylates the pseudouridine at position 1915 (m3Psi1915) in 23S rRNA. This chain is Ribosomal RNA large subunit methyltransferase H, found in Shewanella woodyi (strain ATCC 51908 / MS32).